A 426-amino-acid polypeptide reads, in one-letter code: Serine--tRNA ligase (426 aa).

The span at 1 to 15 (MIDVKDLSENPDKFR) shows a compositional bias: basic and acidic residues. Residues 1 to 22 (MIDVKDLSENPDKFRASQRARG) form a disordered region. 228–230 (TSE) contacts L-serine. ATP-binding positions include 259–261 (RRE) and V275. E282 provides a ligand contact to L-serine. Position 346-349 (346-349 (ELTS)) interacts with ATP. T386 is an L-serine binding site.

The protein belongs to the class-II aminoacyl-tRNA synthetase family. Type-1 seryl-tRNA synthetase subfamily. Homodimer. The tRNA molecule binds across the dimer.

The protein localises to the cytoplasm. The enzyme catalyses tRNA(Ser) + L-serine + ATP = L-seryl-tRNA(Ser) + AMP + diphosphate + H(+). It catalyses the reaction tRNA(Sec) + L-serine + ATP = L-seryl-tRNA(Sec) + AMP + diphosphate + H(+). It functions in the pathway aminoacyl-tRNA biosynthesis; selenocysteinyl-tRNA(Sec) biosynthesis; L-seryl-tRNA(Sec) from L-serine and tRNA(Sec): step 1/1. Its function is as follows. Catalyzes the attachment of serine to tRNA(Ser). Is also able to aminoacylate tRNA(Sec) with serine, to form the misacylated tRNA L-seryl-tRNA(Sec), which will be further converted into selenocysteinyl-tRNA(Sec). This chain is Serine--tRNA ligase, found in Pseudarthrobacter chlorophenolicus (strain ATCC 700700 / DSM 12829 / CIP 107037 / JCM 12360 / KCTC 9906 / NCIMB 13794 / A6) (Arthrobacter chlorophenolicus).